Consider the following 310-residue polypeptide: Porphobilinogen deaminase (310 aa).

Cys240 is subject to S-(dipyrrolylmethanemethyl)cysteine.

This sequence belongs to the HMBS family. In terms of assembly, monomer. Requires dipyrromethane as cofactor.

It carries out the reaction 4 porphobilinogen + H2O = hydroxymethylbilane + 4 NH4(+). It functions in the pathway porphyrin-containing compound metabolism; protoporphyrin-IX biosynthesis; coproporphyrinogen-III from 5-aminolevulinate: step 2/4. Functionally, tetrapolymerization of the monopyrrole PBG into the hydroxymethylbilane pre-uroporphyrinogen in several discrete steps. The sequence is that of Porphobilinogen deaminase from Desulfosudis oleivorans (strain DSM 6200 / JCM 39069 / Hxd3) (Desulfococcus oleovorans).